Reading from the N-terminus, the 344-residue chain is MHPKEGAEQHVFSPVPGAPTPPPNRCGRLVLGPRLPAAGTPGPGIRAAAARHALPLWGGGATRRGRRPAGAAGGGVAARAGALGAARCRPPEAGRHRGGRRGPGPAGAGPVARGGGAGGRGGGAGRGGAGPRGHVLVQVPEAGAGRRALLGRYCQQTPAPGAERELRPAPPTGASASGRPRRPRRRASRAFCPRPCALPGRPGLTLLCRPRCRRQPRLRLPTDSLDPYSAPGRLPAHSVACPSDLVSAHPVLSFFPTAPASRASALRLPPGAPFALRVPLDLRVPPFAGPLAARPRAADGFNSPTPPWLGFVSSFSCSNSLKKTQNDPTNETSVFANPRQQCAT.

Disordered regions lie at residues 1 to 44 (MHPK…PGPG), 58 to 134 (GGGA…PRGH), 158 to 188 (PAPGAERELRPAPPTGASASGRPRRPRRRAS), and 320 to 344 (SLKKTQNDPTNETSVFANPRQQCAT). Positions 77–88 (AARAGALGAARC) are enriched in low complexity. A compositionally biased stretch (gly residues) spans 101-131 (RGPGPAGAGPVARGGGAGGRGGGAGRGGAGP). The segment covering 179 to 188 (RPRRPRRRAS) has biased composition (basic residues).

In terms of assembly, interacts with isoform 1 and isoform 2.

The protein resides in the nucleus. This is Laforin, isoform 9 from Homo sapiens (Human).